Reading from the N-terminus, the 109-residue chain is Large ribosomal subunit protein uL24 (109 aa).

It belongs to the universal ribosomal protein uL24 family. In terms of assembly, part of the 50S ribosomal subunit.

One of two assembly initiator proteins, it binds directly to the 5'-end of the 23S rRNA, where it nucleates assembly of the 50S subunit. In terms of biological role, one of the proteins that surrounds the polypeptide exit tunnel on the outside of the subunit. In Legionella pneumophila (strain Paris), this protein is Large ribosomal subunit protein uL24.